Reading from the N-terminus, the 177-residue chain is Nucleoside triphosphate/diphosphate phosphatase (177 aa).

Arginine 23 (proton donor) is an active-site residue. The Mg(2+) site is built by asparagine 87, aspartate 103, aspartate 105, aspartate 107, aspartate 120, and glutamate 123.

It belongs to the Ntdp family. Mg(2+) serves as cofactor.

The catalysed reaction is a ribonucleoside 5'-triphosphate + H2O = a ribonucleoside 5'-diphosphate + phosphate + H(+). The enzyme catalyses a ribonucleoside 5'-diphosphate + H2O = a ribonucleoside 5'-phosphate + phosphate + H(+). In terms of biological role, has nucleoside phosphatase activity towards nucleoside triphosphates and nucleoside diphosphates. The protein is Nucleoside triphosphate/diphosphate phosphatase of Streptococcus thermophilus (strain ATCC BAA-491 / LMD-9).